A 77-amino-acid polypeptide reads, in one-letter code: Large ribosomal subunit protein uL29 (77 aa).

This sequence belongs to the universal ribosomal protein uL29 family.

The polypeptide is Large ribosomal subunit protein uL29 (Corynebacterium jeikeium (strain K411)).